The sequence spans 537 residues: Chaperonin GroEL (537 aa).

Residues 29–32 (TLGP), 86–90 (DGTTT), G413, and D492 each bind ATP.

Belongs to the chaperonin (HSP60) family. In terms of assembly, forms a cylinder of 14 subunits composed of two heptameric rings stacked back-to-back. Interacts with the co-chaperonin GroES.

It is found in the cytoplasm. The enzyme catalyses ATP + H2O + a folded polypeptide = ADP + phosphate + an unfolded polypeptide.. Its function is as follows. Together with its co-chaperonin GroES, plays an essential role in assisting protein folding. The GroEL-GroES system forms a nano-cage that allows encapsulation of the non-native substrate proteins and provides a physical environment optimized to promote and accelerate protein folding. The sequence is that of Chaperonin GroEL from Dehalococcoides mccartyi (strain ATCC BAA-2100 / JCM 16839 / KCTC 5957 / BAV1).